The primary structure comprises 366 residues: Flagellar P-ring protein (366 aa).

Positions 1 to 22 are cleaved as a signal peptide; that stretch reads MFTRKSVILMAVLLIWSAVSYA.

The protein belongs to the FlgI family. As to quaternary structure, the basal body constitutes a major portion of the flagellar organelle and consists of four rings (L,P,S, and M) mounted on a central rod.

It localises to the periplasm. Its subcellular location is the bacterial flagellum basal body. Its function is as follows. Assembles around the rod to form the L-ring and probably protects the motor/basal body from shearing forces during rotation. This is Flagellar P-ring protein from Hydrogenovibrio crunogenus (strain DSM 25203 / XCL-2) (Thiomicrospira crunogena).